The chain runs to 334 residues: MKNLHSLFLASAFLAGFCGSSLAGEREGVVVSIKPLHSIVSAVMQGVGKPKLIVQGAGSEHVYSLKPSDAEAIEHAKVIFWAGPSMETFLDKPIDTLGEGAKVVALGDAKGLTKLKFREGGPFEAHDHGHGGSHEEEHDAHGSGDHDHAAEVAEEGHEHHHHGEYDLHFWLDPQNGKILAADIAKTLGESDPEHAAQYEKNAKAYGEKLDALTREVAAELKPVKDKPFIVFHDAYQYFENRFGMKAAGSITVSPEKAPGAARIQQIHDKIKSLGATCVFSEPQFEPKLVKTVVDGTKARTGVLDPLGAELKDGPDLYPQLIRNLANSLKDCLSK.

The signal sequence occupies residues 1 to 23 (MKNLHSLFLASAFLAGFCGSSLA). Positions 60 and 61 each coordinate Zn(2+). Positions 120–147 (GGPFEAHDHGHGGSHEEEHDAHGSGDHD) are disordered. Positions 168 and 232 each coordinate Zn(2+). A disulfide bridge links cysteine 277 with cysteine 331.

It belongs to the bacterial solute-binding protein 9 family.

The protein resides in the periplasm. In terms of biological role, part of the ATP-binding cassette (ABC) transport system ZnuABC involved in zinc import. Binds zinc with high affinity and specificity and delivers it to the membrane permease for translocation into the cytoplasm. Required for survival and normal growth under low Zn (2+) concentrations. Also required for virulence and intracellular growth in host cells. This chain is High-affinity zinc uptake system protein ZnuA (znuA), found in Brucella suis biovar 1 (strain 1330).